We begin with the raw amino-acid sequence, 143 residues long: SGTCTIETCWMRLPTFRSVGEFLKDRFDGASRVALRNEGVRGNSNRGDRGDRRDRGDRSDNGGTEANFQPYNSNHKPPGPRDLVYFDDSPDFCVRNERAGTLGTVGRECNNTSLGVDGCDLMCCGRDYDGSEVRIKERCSCTF.

The O-palmitoleoyl serine; by PORCN moiety is linked to residue S1. Residues 38–81 (EGVRGNSNRGDRGDRRDRGDRSDNGGTEANFQPYNSNHKPPGPR) form a disordered region. Over residues 46-60 (RGDRGDRRDRGDRSD) the composition is skewed to basic and acidic residues. Positions 64–75 (TEANFQPYNSNH) are enriched in polar residues. Residues C109 and C124 are joined by a disulfide bond. Residues N110 and N111 are each glycosylated (N-linked (GlcNAc...) asparagine).

This sequence belongs to the Wnt family. Post-translationally, palmitoleoylation is required for efficient binding to frizzled receptors. Palmitoleoylation is necessary for proper trafficking to cell surface. Depalmitoleoylated by NOTUM, leading to inhibit Wnt signaling pathway.

It localises to the secreted. The protein localises to the extracellular space. The protein resides in the extracellular matrix. Ligand for members of the frizzled family of seven transmembrane receptors. Probable developmental protein. This Evasterias troschelii (Mottled sea star) protein is Protein Wnt-1 (WNT-1).